Consider the following 494-residue polypeptide: Truncated non-functional calcium-binding mitochondrial carrier SAL1-1 (494 aa).

An EF-hand 1 domain is found at 11-46 (QRDIRYACLFKELDVKGNGQVTLDNLISAFEKNDHP). Residues Lys-65, Asp-70, Asp-93, Asp-95, Asp-97, Lys-99, and Glu-104 each coordinate Ca(2+). EF-hand domains are found at residues 80–115 (NAES…LDNQ), 120–155 (NELN…RGQA), and 156–191 (SHKK…VPRK). Residues Thr-161 and Ser-166 each coordinate Ca(2+). Solcar repeat units follow at residues 225-332 (IRGF…TKKI) and 345-434 (LSKF…LKKM). The next 5 helical transmembrane spans lie at 231–248 (FIAG…TAPF), 307–326 (GNGL…FGSF), 355–368 (GLAG…VYPI), 409–428 (RCHS…FGDF), and 458–475 (TSNG…CLSN). One copy of the Solcar 3; truncated repeat lies at 452–494 (SKQPGCTSNGCIQWNCRSFCCLSNQSFKNKTTSPRNICTSLCV).

Belongs to the mitochondrial carrier (TC 2.A.29) family.

It localises to the mitochondrion inner membrane. Calcium-dependent mitochondrial solute carrier. This Saccharomyces cerevisiae (strain ATCC 204508 / S288c) (Baker's yeast) protein is Truncated non-functional calcium-binding mitochondrial carrier SAL1-1 (SAL1).